Here is a 537-residue protein sequence, read N- to C-terminus: Senescence-associated carboxylesterase 101 (537 aa).

An N-terminal signal peptide occupies residues 1–27 (MESSSSLKGSALGKLVVTSGLLHSSWS). A helical transmembrane segment spans residues 140 to 160 (VIITGAALGGSVASLYTLWLL).

As to quaternary structure, part of a nuclear complex made of EDS1, PAD4 and SAG101, that can be redirected to the cytoplasm in the presence of an extranuclear form of EDS1. Interacts directly with EDS1. In terms of tissue distribution, expressed in senescing leaves.

The protein localises to the membrane. It localises to the nucleus. It is found in the cytoplasm. It carries out the reaction a carboxylic ester + H2O = an alcohol + a carboxylate + H(+). In terms of biological role, acyl hydrolase that triggers the leaf senescence onset. Can use triolein as substrate to produce oleic acids. Its function is as follows. Involved in the EDS1-dependent intrinsic and indispensable resistance signaling pathway; together with PAD4, required for programmed cell death triggered by RPS4 in response to avirulent pathogens (e.g. P.syringae pv. tomato strain DC3000 and H.parasitica isolates CALA2 and EMWA1) and in restricting the growth of virulent pathogens (e.g. H.parasitica isolates NOCO2 and P.syringae pv. tomato strain DC3000 avrRps4). Contributes in reinforcing the immune response around hypersensitive response foci. Regulates the nuclear localization of EDS1. Essential for the RPP8/HRT-mediated resistance to the turnip crinkle virus (TCV). Involved in the post-invasion resistance to P.pachyrhizi in the mesophyll. In Arabidopsis thaliana (Mouse-ear cress), this protein is Senescence-associated carboxylesterase 101 (SAG101).